The sequence spans 150 residues: UPF0756 membrane protein HD_1071 (150 aa).

4 helical membrane-spanning segments follow: residues 1 to 21 (MSLQ…LGVL), 52 to 72 (YGLT…IVSG), 82 to 102 (ILSW…WLGG), and 114 to 134 (IITG…GIPV).

The protein belongs to the UPF0756 family.

Its subcellular location is the cell membrane. This is UPF0756 membrane protein HD_1071 from Haemophilus ducreyi (strain 35000HP / ATCC 700724).